Reading from the N-terminus, the 435-residue chain is GTPase Obg (435 aa).

Residues 6-164 (ADFVDRVKIF…RWLELELKIL (159 aa)) enclose the Obg domain. One can recognise an OBG-type G domain in the interval 165-335 (ADVGLVGYPN…LVSKLASIVR (171 aa)). GTP is bound by residues 171 to 178 (GYPNVGKS), 196 to 200 (FTTLI), 217 to 220 (DIPG), 287 to 290 (NKID), and 316 to 318 (SAV). Mg(2+) contacts are provided by Ser-178 and Thr-198. An OCT domain is found at 357–435 (RRLPEKFHLE…IGDFEFEYRE (79 aa)).

The protein belongs to the TRAFAC class OBG-HflX-like GTPase superfamily. OBG GTPase family. Monomer. Requires Mg(2+) as cofactor.

The protein resides in the cytoplasm. In terms of biological role, an essential GTPase which binds GTP, GDP and possibly (p)ppGpp with moderate affinity, with high nucleotide exchange rates and a fairly low GTP hydrolysis rate. Plays a role in control of the cell cycle, stress response, ribosome biogenesis and in those bacteria that undergo differentiation, in morphogenesis control. This is GTPase Obg from Thermotoga petrophila (strain ATCC BAA-488 / DSM 13995 / JCM 10881 / RKU-1).